The primary structure comprises 881 residues: Alanine--tRNA ligase (881 aa).

This sequence belongs to the class-II aminoacyl-tRNA synthetase family.

Its subcellular location is the cytoplasm. It catalyses the reaction tRNA(Ala) + L-alanine + ATP = L-alanyl-tRNA(Ala) + AMP + diphosphate. In terms of biological role, catalyzes the attachment of alanine to tRNA(Ala) in a two-step reaction: alanine is first activated by ATP to form Ala-AMP and then transferred to the acceptor end of tRNA(Ala). Also edits incorrectly charged Ser-tRNA(Ala) and Gly-tRNA(Ala) via its editing domain. The sequence is that of Alanine--tRNA ligase (alaS) from Lacticaseibacillus paracasei (strain ATCC 334 / BCRC 17002 / CCUG 31169 / CIP 107868 / KCTC 3260 / NRRL B-441) (Lactobacillus paracasei).